The primary structure comprises 248 residues: Phosphoribosylaminoimidazole-succinocarboxamide synthase (248 aa).

The protein belongs to the SAICAR synthetase family.

It catalyses the reaction 5-amino-1-(5-phospho-D-ribosyl)imidazole-4-carboxylate + L-aspartate + ATP = (2S)-2-[5-amino-1-(5-phospho-beta-D-ribosyl)imidazole-4-carboxamido]succinate + ADP + phosphate + 2 H(+). The protein operates within purine metabolism; IMP biosynthesis via de novo pathway; 5-amino-1-(5-phospho-D-ribosyl)imidazole-4-carboxamide from 5-amino-1-(5-phospho-D-ribosyl)imidazole-4-carboxylate: step 1/2. This Methanothermobacter thermautotrophicus (strain ATCC 29096 / DSM 1053 / JCM 10044 / NBRC 100330 / Delta H) (Methanobacterium thermoautotrophicum) protein is Phosphoribosylaminoimidazole-succinocarboxamide synthase (purC).